A 167-amino-acid chain; its full sequence is Troponin C-akin-1 protein (167 aa).

17–20 (YGAL) provides a ligand contact to substrate. The active-site Proton acceptor is E92.

It belongs to the gamma-glutamylcyclotransferase family. In embryos, expression is seen in heart cells of the dorsal vessel and hindgut visceral mesoderm.

Putative gamma-glutamylcyclotransferase. In Drosophila melanogaster (Fruit fly), this protein is Troponin C-akin-1 protein (Tina-1).